The chain runs to 357 residues: 3-isopropylmalate dehydrogenase (357 aa).

Substrate-binding residues include arginine 97, arginine 107, arginine 135, and aspartate 224. 3 residues coordinate Mg(2+): aspartate 224, aspartate 248, and aspartate 252. 282–294 (GSAPDIAGKNIAN) contributes to the NAD(+) binding site.

The protein belongs to the isocitrate and isopropylmalate dehydrogenases family. LeuB type 1 subfamily. As to quaternary structure, homodimer. Requires Mg(2+) as cofactor. Mn(2+) serves as cofactor.

It is found in the cytoplasm. It catalyses the reaction (2R,3S)-3-isopropylmalate + NAD(+) = 4-methyl-2-oxopentanoate + CO2 + NADH. Its pathway is amino-acid biosynthesis; L-leucine biosynthesis; L-leucine from 3-methyl-2-oxobutanoate: step 3/4. Functionally, catalyzes the oxidation of 3-carboxy-2-hydroxy-4-methylpentanoate (3-isopropylmalate) to 3-carboxy-4-methyl-2-oxopentanoate. The product decarboxylates to 4-methyl-2 oxopentanoate. The polypeptide is 3-isopropylmalate dehydrogenase (Prochlorococcus marinus (strain MIT 9312)).